Here is a 184-residue protein sequence, read N- to C-terminus: Large ribosomal subunit protein uL10 (184 aa).

This sequence belongs to the universal ribosomal protein uL10 family. Part of the ribosomal stalk of the 50S ribosomal subunit. The N-terminus interacts with L11 and the large rRNA to form the base of the stalk. The C-terminus forms an elongated spine to which L12 dimers bind in a sequential fashion forming a multimeric L10(L12)X complex.

Functionally, forms part of the ribosomal stalk, playing a central role in the interaction of the ribosome with GTP-bound translation factors. The sequence is that of Large ribosomal subunit protein uL10 from Gluconobacter oxydans (strain 621H) (Gluconobacter suboxydans).